The following is a 634-amino-acid chain: Probable potassium transport system protein Kup (634 aa).

Transmembrane regions (helical) follow at residues 21-41 (LVIGAIGVVFGDIGTSPLYTL), 58-78 (VLGILSLVFWALMLVVTLKYV), 110-130 (MYVVGILGIFGASLFFGDGVI), 152-172 (PFVVPITLVVLGMLFLAQRFG), 179-199 (AFGPITLLWFFALGAIGVYNM), 223-243 (WHAVFVLGAVVLAVTGGEALY), 258-278 (WQFVVLPMLTLTYLGQGALML), 296-316 (ALYPMIVLATAATVIASQALI), 348-368 (IYVPAVNWCLLALVAVAVIGF), 377-397 (AYGVSVTGTMLITTVLMIIYA), 403-423 (VPAPLLWLFALVFLAVDCAFF), and 427-447 (IIKFLDGAWFPLLLGLILFTL).

This sequence belongs to the HAK/KUP transporter (TC 2.A.72) family.

It localises to the cell inner membrane. The enzyme catalyses K(+)(in) + H(+)(in) = K(+)(out) + H(+)(out). Its function is as follows. Transport of potassium into the cell. Likely operates as a K(+):H(+) symporter. This chain is Probable potassium transport system protein Kup, found in Xanthomonas euvesicatoria pv. vesicatoria (strain 85-10) (Xanthomonas campestris pv. vesicatoria).